A 430-amino-acid chain; its full sequence is 3-phosphoshikimate 1-carboxyvinyltransferase (430 aa).

3-phosphoshikimate contacts are provided by Lys-21, Ser-22, and Arg-26. A phosphoenolpyruvate-binding site is contributed by Lys-21. Gly-95 and Arg-123 together coordinate phosphoenolpyruvate. Thr-167, Gln-169, Asp-315, and Lys-342 together coordinate 3-phosphoshikimate. Residue Gln-169 participates in phosphoenolpyruvate binding. Residue Asp-315 is the Proton acceptor of the active site. Phosphoenolpyruvate contacts are provided by Arg-346 and Arg-390.

Belongs to the EPSP synthase family. As to quaternary structure, monomer.

The protein resides in the cytoplasm. The catalysed reaction is 3-phosphoshikimate + phosphoenolpyruvate = 5-O-(1-carboxyvinyl)-3-phosphoshikimate + phosphate. Its pathway is metabolic intermediate biosynthesis; chorismate biosynthesis; chorismate from D-erythrose 4-phosphate and phosphoenolpyruvate: step 6/7. Its function is as follows. Catalyzes the transfer of the enolpyruvyl moiety of phosphoenolpyruvate (PEP) to the 5-hydroxyl of shikimate-3-phosphate (S3P) to produce enolpyruvyl shikimate-3-phosphate and inorganic phosphate. This chain is 3-phosphoshikimate 1-carboxyvinyltransferase, found in Endomicrobium trichonymphae.